Consider the following 949-residue polypeptide: UvrABC system protein A (949 aa).

42–49 is a binding site for ATP; that stretch reads GLSGSGKS. The C4-type zinc finger occupies 262 to 289; sequence CPVCSYSLPELEPRLFSFNNPMGSCPTC. ABC transporter domains follow at residues 319–596 and 616–945; these read WDKR…ENSV and VNPD…KYLK. ATP is bound at residue 649–656; that stretch reads GVSGSGKS. Residues 748-774 form a C4-type zinc finger; it reads CEACQGDGVIKVEMHFLPDVYVPCEVC.

This sequence belongs to the ABC transporter superfamily. UvrA family. As to quaternary structure, forms a heterotetramer with UvrB during the search for lesions.

Its subcellular location is the cytoplasm. The UvrABC repair system catalyzes the recognition and processing of DNA lesions. UvrA is an ATPase and a DNA-binding protein. A damage recognition complex composed of 2 UvrA and 2 UvrB subunits scans DNA for abnormalities. When the presence of a lesion has been verified by UvrB, the UvrA molecules dissociate. This is UvrABC system protein A from Neisseria meningitidis serogroup B (strain ATCC BAA-335 / MC58).